The primary structure comprises 199 residues: MRLTAKQIIWLKVCLHLVGFLPLLWLFWAINQGGLSADPVKDIQHFTGRTALKFLLATLLISPLARYAKQPLLIRTRRLLGLWCFVWATLHLTSYALLELGIHNLALLGSELISRPYLTLGIISWLALLALTLTSTQFAQRKLGKRWQTLHNVVYLVAILAPVHYLWSVKVLSPQPVIYAALALVLLALRYRKFRQWRR.

The next 4 helical transmembrane spans lie at 8 to 28 (IIWLKVCLHLVGFLPLLWLFW), 82 to 102 (LWCFVWATLHLTSYALLELGI), 116 to 136 (PYLTLGIISWLALLALTLTST), and 153 to 173 (VVYLVAILAPVHYLWSVKVLS).

The protein belongs to the MsrQ family. Heterodimer of a catalytic subunit (MsrP) and a heme-binding subunit (MsrQ). FMN is required as a cofactor. It depends on heme b as a cofactor.

It is found in the cell inner membrane. Functionally, part of the MsrPQ system that repairs oxidized periplasmic proteins containing methionine sulfoxide residues (Met-O), using respiratory chain electrons. Thus protects these proteins from oxidative-stress damage caused by reactive species of oxygen and chlorine generated by the host defense mechanisms. MsrPQ is essential for the maintenance of envelope integrity under bleach stress, rescuing a wide series of structurally unrelated periplasmic proteins from methionine oxidation, including the primary periplasmic chaperone SurA and the lipoprotein Pal. MsrQ provides electrons for reduction to the reductase catalytic subunit MsrP, using the quinone pool of the respiratory chain. The protein is Protein-methionine-sulfoxide reductase heme-binding subunit MsrQ of Salmonella arizonae (strain ATCC BAA-731 / CDC346-86 / RSK2980).